The chain runs to 250 residues: Isoprenyl transferase (250 aa).

Asp27 is an active-site residue. Asp27 is a Mg(2+) binding site. Substrate contacts are provided by residues 28 to 31, Trp32, His48, and 76 to 78; these read GNRR and STE. The active-site Proton acceptor is the Asn79. Substrate is bound by residues Phe80, Arg82, Arg199, and 205-207; that span reads RVS. Glu218 is a binding site for Mg(2+).

This sequence belongs to the UPP synthase family. In terms of assembly, homodimer. Requires Mg(2+) as cofactor.

Functionally, catalyzes the condensation of isopentenyl diphosphate (IPP) with allylic pyrophosphates generating different type of terpenoids. The chain is Isoprenyl transferase from Chlamydia caviae (strain ATCC VR-813 / DSM 19441 / 03DC25 / GPIC) (Chlamydophila caviae).